A 123-amino-acid polypeptide reads, in one-letter code: Small ribosomal subunit protein uS12 (123 aa).

Asp-89 bears the 3-methylthioaspartic acid mark. The tract at residues 104 to 123 (SVGVKDRKKSRSKYGAKRPK) is disordered. Residues 109-123 (DRKKSRSKYGAKRPK) show a composition bias toward basic residues.

It belongs to the universal ribosomal protein uS12 family. As to quaternary structure, part of the 30S ribosomal subunit. Contacts proteins S8 and S17. May interact with IF1 in the 30S initiation complex.

Functionally, with S4 and S5 plays an important role in translational accuracy. Its function is as follows. Interacts with and stabilizes bases of the 16S rRNA that are involved in tRNA selection in the A site and with the mRNA backbone. Located at the interface of the 30S and 50S subunits, it traverses the body of the 30S subunit contacting proteins on the other side and probably holding the rRNA structure together. The combined cluster of proteins S8, S12 and S17 appears to hold together the shoulder and platform of the 30S subunit. The chain is Small ribosomal subunit protein uS12 from Geotalea daltonii (strain DSM 22248 / JCM 15807 / FRC-32) (Geobacter daltonii).